The chain runs to 440 residues: tRNA-2-methylthio-N(6)-dimethylallyladenosine synthase (440 aa).

The region spanning 3–119 is the MTTase N-terminal domain; that stretch reads KKFFIKTFGC…LPELINQAQA (117 aa). C12, C48, C82, C158, C162, and C165 together coordinate [4Fe-4S] cluster. The Radical SAM core domain occupies 144–374; that stretch reads RDNKYCAYVT…LELQKSILSE (231 aa). The region spanning 377–437 is the TRAM domain; sequence KKYEGTVQEV…PFSLEGELLE (61 aa).

This sequence belongs to the methylthiotransferase family. MiaB subfamily. As to quaternary structure, monomer. [4Fe-4S] cluster serves as cofactor.

The protein localises to the cytoplasm. It catalyses the reaction N(6)-dimethylallyladenosine(37) in tRNA + (sulfur carrier)-SH + AH2 + 2 S-adenosyl-L-methionine = 2-methylsulfanyl-N(6)-dimethylallyladenosine(37) in tRNA + (sulfur carrier)-H + 5'-deoxyadenosine + L-methionine + A + S-adenosyl-L-homocysteine + 2 H(+). Catalyzes the methylthiolation of N6-(dimethylallyl)adenosine (i(6)A), leading to the formation of 2-methylthio-N6-(dimethylallyl)adenosine (ms(2)i(6)A) at position 37 in tRNAs that read codons beginning with uridine. The chain is tRNA-2-methylthio-N(6)-dimethylallyladenosine synthase from Aquifex aeolicus (strain VF5).